A 399-amino-acid polypeptide reads, in one-letter code: MKMRFLGLVVCLVLWTLHSEASGGKLTAVNPETNMNVSEIISYWGFPSEEYLVETEDGYILCLNRIPHGRKNHSDKGPKPVVFLQHGLLADSSNWVTNLANSSLGFILADAGFDVWMGNSRGNTWSRKHKTLSVSQDEFWAFSYDEMAKYDLPASINFILNKTGQEQVYYVGHSQGTTIGFIAFSQIPELAKRIKMFFALAPVVSVDFCTSPMAKLGRLPDLLIKDLFGDKEFLPQSAFLKWLGTHVCTHVILKELCGNLCFLLCGFNERNLNMSRVDVYTTHSPAGTSVQNMLHWSQAVKFQKFQAFDWGSSAKNYFHYNQSYPPTYNVKDMLVPTAVWSGGHDWLADVYDINILLTQITNLVFHESIPEWEHLDFIWGLDAPWRLYNKIINLMKKYQ.

The signal sequence occupies residues methionine 1–threonine 27. Positions alanine 28–lysine 76 are cleaved as a propeptide — removed in mature form. N-linked (GlcNAc...) asparagine glycans are attached at residues asparagine 36, asparagine 72, asparagine 101, and asparagine 161. The region spanning proline 80 to glycine 380 is the AB hydrolase-1 domain. The active-site Charge relay system is the serine 174. Asparagine 273 and asparagine 321 each carry an N-linked (GlcNAc...) asparagine glycan. Histidine 374 functions as the Charge relay system in the catalytic mechanism.

It belongs to the AB hydrolase superfamily. Lipase family. Monomer. Post-translationally, glycosylation is not essential for catalytic activity.

Its subcellular location is the lysosome. The catalysed reaction is a sterol ester + H2O = a sterol + a fatty acid + H(+). The enzyme catalyses cholesteryl (9Z-octadecenoate) + H2O = cholesterol + (9Z)-octadecenoate + H(+). It carries out the reaction a triacylglycerol + H2O = a 1,2-diacylglycerol + a fatty acid + H(+). It catalyses the reaction 1,2-di-(9Z-octadecenoyl)-glycerol + (9Z)-octadecenoate + H(+) = 1,2,3-tri-(9Z-octadecenoyl)-glycerol + H2O. The catalysed reaction is a 1,2-diacylglycerol + H2O = a 1-acylglycerol + a fatty acid + H(+). The enzyme catalyses 1,2-di-(9Z-octadecenoyl)-glycerol + H2O = 1-(9Z-octadecenoyl)-glycerol + (9Z)-octadecenoate + H(+). It carries out the reaction a 1,3-diacylglycerol + H2O = a 1-acylglycerol + a fatty acid + H(+). It catalyses the reaction 1,3-di-(9Z-octadecenoyl)-glycerol + H2O = 1-(9Z-octadecenoyl)-glycerol + (9Z)-octadecenoate + H(+). In terms of biological role, catalyzes the deacylation of cholesteryl ester core lipids of endocytosed low density lipoproteins to generate free fatty acids and cholesterol. Hydrolyzes triglycerides (1,2,3-triacylglycerol) and diglycerides (such as 1,2-diacylglycerol and 1,3-diacylglycerol) with preference for the acyl moieties at the sn-1 or sn-3 positions. The chain is Lysosomal acid lipase/cholesteryl ester hydrolase (LIPA) from Macaca fascicularis (Crab-eating macaque).